A 510-amino-acid polypeptide reads, in one-letter code: MIWHVQNENFILDSTRIFMKAFHLLLFDGSFIFPECILIFGLILLLMIDSTSDQKDIPWLYFISSTSLVMSITALLFRWREEPMISFSGNFQTNNFNEIFQFLILLCSTLCIPLSVEYIECTEMAIAEFLLFVLTATLGGMFLCGANDLITIFVAPECFSLCSYLLSGYTKKDVRSNEATTKYLLMGGASSSILVHGFSWLYGSSGGEIELQEIVNGLINTQMYNSPGISIALIFITVGIGFKLSPAPSHQWTPDVYEGSPTPVVAFLSVTSKVAASASATRIFDIPFYFSSNEWHLLLEILAILSMILGNLIAITQTSMKRMLAYSSIGQIGYVIIGIIVGNSNGGYASMITYMLFYISMNLGTFACIVLFGLRTGTDNIRDYAGLYTKDPFLALSLAPCLLSLGGLPPLAGFFGKLHLFWCGWQAGLYFLVSIGLLTSVVSIYYYLKIIKLLMTGRNQEITPHVRNYRRSPLRSNNSIELSMIVCVIASTIPGISMNPIIAIAQDTLF.

13 helical membrane passes run 24 to 44 (LLLF…GLIL), 57 to 77 (IPWL…ALLF), 99 to 119 (IFQF…VEYI), 124 to 144 (MAIA…MFLC), 149 to 169 (LITI…LSGY), 183 to 203 (YLLM…WLYG), 227 to 247 (PGIS…LSPA), 295 to 315 (WHLL…LIAI), 323 to 343 (MLAY…IVGN), 354 to 374 (YMLF…LFGL), 395 to 415 (ALSL…AGFF), 418 to 438 (LHLF…IGLL), and 484 to 504 (MIVC…IIAI).

This sequence belongs to the complex I subunit 2 family. In terms of assembly, NDH is composed of at least 16 different subunits, 5 of which are encoded in the nucleus.

Its subcellular location is the plastid. It is found in the chloroplast thylakoid membrane. The catalysed reaction is a plastoquinone + NADH + (n+1) H(+)(in) = a plastoquinol + NAD(+) + n H(+)(out). It carries out the reaction a plastoquinone + NADPH + (n+1) H(+)(in) = a plastoquinol + NADP(+) + n H(+)(out). Its function is as follows. NDH shuttles electrons from NAD(P)H:plastoquinone, via FMN and iron-sulfur (Fe-S) centers, to quinones in the photosynthetic chain and possibly in a chloroplast respiratory chain. The immediate electron acceptor for the enzyme in this species is believed to be plastoquinone. Couples the redox reaction to proton translocation, and thus conserves the redox energy in a proton gradient. The polypeptide is NAD(P)H-quinone oxidoreductase subunit 2 B, chloroplastic (Gossypium barbadense (Sea Island cotton)).